Reading from the N-terminus, the 305-residue chain is UDP-3-O-acyl-N-acetylglucosamine deacetylase (305 aa).

Zn(2+) is bound by residues histidine 79, histidine 238, and aspartate 242. Catalysis depends on histidine 265, which acts as the Proton donor.

Belongs to the LpxC family. Zn(2+) is required as a cofactor.

It catalyses the reaction a UDP-3-O-[(3R)-3-hydroxyacyl]-N-acetyl-alpha-D-glucosamine + H2O = a UDP-3-O-[(3R)-3-hydroxyacyl]-alpha-D-glucosamine + acetate. It functions in the pathway glycolipid biosynthesis; lipid IV(A) biosynthesis; lipid IV(A) from (3R)-3-hydroxytetradecanoyl-[acyl-carrier-protein] and UDP-N-acetyl-alpha-D-glucosamine: step 2/6. In terms of biological role, catalyzes the hydrolysis of UDP-3-O-myristoyl-N-acetylglucosamine to form UDP-3-O-myristoylglucosamine and acetate, the committed step in lipid A biosynthesis. This is UDP-3-O-acyl-N-acetylglucosamine deacetylase from Haemophilus influenzae (strain PittGG).